Reading from the N-terminus, the 776-residue chain is Glucocorticoid receptor (776 aa).

Polar residues predominate over residues Met1–Ser11. A disordered region spans residues Met1–Asn25. Residues Met1–Phe419 are modulating. Thr8 is modified (phosphothreonine). An Omega-N-methylarginine modification is found at Arg23. Ser45, Ser113, and Ser134 each carry phosphoserine. Positions Pro157–Gly178 are disordered. Residues Ser161–Thr174 are compositionally biased toward polar residues. 3 positions are modified to phosphoserine: Ser203, Ser211, and Ser226. Lys258 participates in a covalent cross-link: Glycyl lysine isopeptide (Lys-Gly) (interchain with G-Cter in SUMO2). A Phosphoserine modification is found at Ser267. Glycyl lysine isopeptide (Lys-Gly) (interchain with G-Cter in SUMO); alternate cross-links involve residues Lys277 and Lys293. Residues Lys277 and Lys293 each participate in a glycyl lysine isopeptide (Lys-Gly) (interchain with G-Cter in SUMO2); alternate cross-link. Phosphoserine occurs at positions 307 and 404. Residues Pro417–Thr492 constitute a DNA-binding region (nuclear receptor). Residue Lys418 forms a Glycyl lysine isopeptide (Lys-Gly) (interchain with G-Cter in ubiquitin) linkage. 2 NR C4-type zinc fingers span residues Cys420 to Cys440 and Cys456 to Cys480. 4 positions are modified to N6-acetyllysine: Lys479, Lys491, Lys493, and Lys494. The segment at Gly484–Lys776 is interaction with CLOCK. The hinge stretch occupies residues Asn486–Ala522. One can recognise an NR LBD domain in the interval Thr523 to Thr757. Positions Pro531–Leu696 are interaction with CRY1. Lys702 participates in a covalent cross-link: Glycyl lysine isopeptide (Lys-Gly) (interchain with G-Cter in SUMO).

It belongs to the nuclear hormone receptor family. NR3 subfamily. As to quaternary structure, heteromultimeric cytoplasmic complex with HSP90AA1, HSPA1A/HSPA1B, and FKBP5 or another immunophilin such as PPID, STIP1, or the immunophilin homolog PPP5C. Upon ligand binding FKBP5 dissociates from the complex and FKBP4 takes its place, thereby linking the complex to dynein and mediating transport to the nucleus, where the complex dissociates. Probably forms a complex composed of chaperones HSP90 and HSP70, co-chaperones CDC37, PPP5C, TSC1 and client protein TSC2, CDK4, AKT, RAF1 and NR3C1; this complex does not contain co-chaperones STIP1/HOP and PTGES3/p23. Directly interacts with UNC45A. Binds to DNA as a homodimer, and as heterodimer with NR3C2 or the retinoid X receptor. Binds STAT5A and STAT5B homodimers and heterodimers. Interacts with NRIP1, POU2F1, POU2F2 and TRIM28. Interacts with several coactivator complexes, including the SMARCA4 complex, CREBBP/EP300, TADA2L (Ada complex) and p160 coactivators such as NCOA2 and NCOA6. Interaction with BAG1 inhibits transactivation. Interacts with HEXIM1 and TGFB1I1. Interacts with NCOA1. Interacts with NCOA3, SMARCA4, SMARCC1, SMARCD1, and SMARCE1. Interacts with CLOCK, CRY1 and CRY2 in a ligand-dependent fashion. Interacts with CIART. Interacts with RWDD3. Interacts with UBE2I/UBC9 and this interaction is enhanced in the presence of RWDD3. Interacts with GRIP1. Interacts with NR4A3 (via nuclear receptor DNA-binding domain), represses transcription activity of NR4A3 on the POMC promoter Nur response element (NurRE). Directly interacts with PNRC2 to attract and form a complex with UPF1 and DCP1A; the interaction leads to rapid mRNA degradation. Interacts with GSK3B. Interacts with FNIP1 and FNIP2. Interacts (via C-terminus) with NR3C1 (via C-terminus). Interacts with MCM3AP. Interacts (via domain NR LBD) with HSP90AA1 and HSP90AB1. In the absence of hormonal ligand, interacts with TACC1. Post-translationally, acetylation by CLOCK reduces its binding to glucocorticoid response elements and its transcriptional activity. In terms of processing, increased proteasome-mediated degradation in response to glucocorticoids. Phosphorylated in the absence of hormone; becomes hyperphosphorylated in the presence of glucocorticoid. The Ser-203, Ser-226 and Ser-404-phosphorylated forms are mainly cytoplasmic, and the Ser-211-phosphorylated form is nuclear. Phosphorylation at Ser-211 increases transcriptional activity. Phosphorylation at Ser-203, Ser-226 and Ser-404 decreases signaling capacity. Phosphorylation at Ser-404 may protect from glucocorticoid-induced apoptosis. Phosphorylation at Ser-203 and Ser-211 is not required in regulation of chromosome segregation. May be dephosphorylated by PPP5C, attenuates NR3C1 action. Post-translationally, sumoylation at Lys-277 and Lys-293 negatively regulates its transcriptional activity. Sumoylation at Lys-702 positively regulates its transcriptional activity in the presence of RWDD3. Sumoylation at Lys-277 and Lys-293 is dispensable whereas sumoylation at Lys-702 is critical for the stimulatory effect of RWDD3 on its transcriptional activity. Heat shock increases sumoylation in a RWDD3-dependent manner. In terms of processing, ubiquitinated by UBR5, leading to its degradation: UBR5 specifically recognizes and binds ligand-bound NR3C1 when it is not associated with coactivators (NCOAs). In presence of NCOAs, the UBR5-degron is not accessible, preventing its ubiquitination and degradation.

The protein localises to the cytoplasm. Its subcellular location is the nucleus. The protein resides in the mitochondrion. It localises to the cytoskeleton. It is found in the spindle. The protein localises to the microtubule organizing center. Its subcellular location is the centrosome. The protein resides in the chromosome. It localises to the nucleoplasm. Functionally, receptor for glucocorticoids (GC). Has a dual mode of action: as a transcription factor that binds to glucocorticoid response elements (GRE), both for nuclear and mitochondrial DNA, and as a modulator of other transcription factors. Affects inflammatory responses, cellular proliferation and differentiation in target tissues. Involved in chromatin remodeling. Plays a role in rapid mRNA degradation by binding to the 5' UTR of target mRNAs and interacting with PNRC2 in a ligand-dependent manner which recruits the RNA helicase UPF1 and the mRNA-decapping enzyme DCP1A, leading to RNA decay. Could act as a coactivator for STAT5-dependent transcription upon growth hormone (GH) stimulation and could reveal an essential role of hepatic GR in the control of body growth. Mediates glucocorticoid-induced apoptosis. Promotes accurate chromosome segregation during mitosis. May act as a tumor suppressor. May play a negative role in adipogenesis through the regulation of lipolytic and antilipogenic gene expression. This chain is Glucocorticoid receptor (NR3C1), found in Tupaia belangeri (Common tree shrew).